A 1098-amino-acid polypeptide reads, in one-letter code: Beta-alanine-activating enzyme (1098 aa).

ATP-binding positions include 198–206, Asp428, Arg442, and Lys527; that span reads TSGTTGIPK. Residues 553–630 form the Carrier domain; sequence EDLWEKLQYL…EIYNHILQTV (78 aa). At Ser589 the chain carries O-(pantetheine 4'-phosphoryl)serine. Residues Ser649 and Ser724 each carry the phosphoserine modification.

This sequence belongs to the ATP-dependent AMP-binding enzyme family. In terms of tissue distribution, ubiquitously expressed in adult tissues.

Its function is as follows. Covalently binds beta-alanine in an ATP-dependent manner to form a thioester bond with its phosphopantetheine group and transfers it to an, as yet, unknown acceptor. May be required for a post-translational protein modification or for post-transcriptional modification of an RNA. This is Beta-alanine-activating enzyme (AASDH) from Homo sapiens (Human).